The sequence spans 360 residues: Peptide chain release factor 1 (360 aa).

Residue Q235 is modified to N5-methylglutamine. The disordered stretch occupies residues 286–313 (RQQAEASTRRNLLGSGDRSDRNRTYNFP).

The protein belongs to the prokaryotic/mitochondrial release factor family. Post-translationally, methylated by PrmC. Methylation increases the termination efficiency of RF1.

The protein localises to the cytoplasm. Functionally, peptide chain release factor 1 directs the termination of translation in response to the peptide chain termination codons UAG and UAA. The protein is Peptide chain release factor 1 of Cronobacter sakazakii (strain ATCC BAA-894) (Enterobacter sakazakii).